The primary structure comprises 219 residues: ATP-dependent dethiobiotin synthetase BioD (219 aa).

12 to 17 (EVGKTY) contributes to the ATP binding site. Residue threonine 16 participates in Mg(2+) binding. Lysine 37 is a catalytic residue. Serine 41 contacts substrate. ATP is bound by residues aspartate 52, 114–117 (EGAG), and 174–175 (NC). Residues aspartate 52 and glutamate 114 each coordinate Mg(2+).

Belongs to the dethiobiotin synthetase family. As to quaternary structure, homodimer. It depends on Mg(2+) as a cofactor.

It localises to the cytoplasm. The catalysed reaction is (7R,8S)-7,8-diammoniononanoate + CO2 + ATP = (4R,5S)-dethiobiotin + ADP + phosphate + 3 H(+). The protein operates within cofactor biosynthesis; biotin biosynthesis; biotin from 7,8-diaminononanoate: step 1/2. Functionally, catalyzes a mechanistically unusual reaction, the ATP-dependent insertion of CO2 between the N7 and N8 nitrogen atoms of 7,8-diaminopelargonic acid (DAPA, also called 7,8-diammoniononanoate) to form a ureido ring. This Francisella tularensis subsp. holarctica (strain FTNF002-00 / FTA) protein is ATP-dependent dethiobiotin synthetase BioD.